Reading from the N-terminus, the 563-residue chain is Lipase 1 (563 aa).

The N-terminal stretch at 1–19 is a signal peptide; that stretch reads MVSKTFFLAAALNVVGTLA. Gln-20 is modified (pyrrolidone carboxylic acid). A disulfide bridge links Cys-80 with Cys-124. Ser-236 serves as the catalytic Acyl-ester intermediate. Cys-295 and Cys-307 form a disulfide bridge. An N-linked (GlcNAc...) asparagine glycan is attached at Asn-302. Glu-373 acts as the Charge relay system in catalysis. Residue Asn-383 is glycosylated (N-linked (GlcNAc...) asparagine). The active-site Charge relay system is His-482.

The protein belongs to the type-B carboxylesterase/lipase family. Monomer.

It is found in the secreted. The catalysed reaction is a triacylglycerol + H2O = a diacylglycerol + a fatty acid + H(+). In terms of biological role, hydrolyzes all ester bonds in triglyceride and displays a high affinity for triolein. For unsaturated substrates having long fatty acyl chains (C18:2 cis-9, cis-12 and C18:3 cis-9, cis-12, cis-15) GCL I shows higher specific activity than GCL II, whereas GCL II shows higher specific activity against saturated substrates having short fatty acid chains (C8, C10, C12 and C14). The chain is Lipase 1 (LIP1) from Geotrichum candidum (Oospora lactis).